The sequence spans 5538 residues: MFRALMGGGRSSDSRSTTSSSKSSSRRRTNSKASSTVSRKSSRGDDRDRGLGDLSAYSFSGSRSKRYAPSAAGDSVASSYATAEPGIAVEHDRIIIERTLKRRDTDEESGRDRYSEIRDRDGRSSRRRDRDRSQSRERERPRSERIERAQLEDDAVESRDRRRERSRTQPGDTYLPPVSPSMPIQPNSPLVYDPHVQQQFPGQFPAYVAEPYRPPNPAGEAADYYGDQGQSVADQPGVRPKPPPIIPSSQAHLMTASPVANPPPEPSSMGQVGAAAAYFADDAELEVDPAPGRPDRPTAGTTSEPPKPSNTTFGISGIAAGAAAYGAGGSLPLPASPTSPPEPVPTTAPYAPPVTSSTTKPPHTHGIGASVGAAAAGAAAGYMLGHHQHHSMSSADHLSQYTMQNYDESSQYGLGIPGPTVYNAPANAEWHAAGTGTAVPYAASPLHPHHAAVHHGAPFPSGSLAFQQRQRGPLDKFIDFWRDPEGVGMFEEYTEAIGVCKYCFEPGTSSRDAPRKHHYRQRRSSGERYASGSRVGKASRYTSSEDEGRRRKKSSRNSWLLPGLLGGIAAKALFNNKDFEDTYSVRSGRVMTVKDTESVSTARRSQTSRGVYRRRSQSRDRESRIIYSDSKSQYEDKRHRSRSRSHSSSRNRRHSALRDAAVGAAVGSGAIALAKSRDRSRSRSRSRSRFPRKSKGRKSSTSDSSSFLDISQPARKSVGGGIASFFTASSENRGKRRVKKRRSIFSFNNSSSSSLDADLAFGTGFARKPARKSTKKSSKKKDRDVDAALLGLGAAATALAATSHRRSRRAGEILVAKETRSRHSDYASSVTNDEGWEDLDSGDQSSSSVSSALAFGDTGLFGSDESQSSDSGTSKWGWRWGSKKNKKKKRASSPQGRFPTGAALAAGALGTAALASTQDRDSRLPRQHASSSSGSLQHVAPVPTNDPTLVDAVRVASLPHAEPAFVRPGPIPLQQPQPMTPVSQAVYATQGASIPTYAAPMAPPAFPPTSYIPYRPEQIQNVALGFNRPHHRSDSSPVFHTEPLEGVPAPGLKRRSTSKDQSSVQFDLTKEQADKERRMDRLEQLKRDAERASGVQLIDRDHEPTVRDDDRRSGRYEDRGYVDRRQDEPREDRYAMDSGKDKDSFSRVGAVAAGSIGAAAAATVLSGRSSVDESSETSQRRHEERRQQRRAERRRGSEPESAVSSRSKSERAQETTDYLPEERQPEPTKPPSPSRSPHKYDDYAEFFAPEELRYSPDTYKQRAPTSMPTIVEIEPASERQSREALLPAEESHPGYRDLPWPVPVLKLIEPTPPQSVSGSVRDAASPVGNPRDLPPHEEEEDVKPAARQTTGSRVSWGEHKTHEYEVPSTSSELESVDHETTREREQPHSPVLQQRYVSPKNAADDVGADIEFAAALAAATAAAGFNPALVTEDPTYHTWSSPPGSHGRVEYRDPWVETESKSRIPHGFVEGEVETPEEEKAPSSRVIEEQPLYSEPEPVSREPESQESSEPQTRTSIAQEVIDRLSEKQDERDGSRKALYGTEKSSNSGKERDESELRAQDSFSMPGGFETEELRSDPKRDVDSRDDGDVDRRSVASAPVSGEYDFSTRPRKSTQDSEYFDNGEDAGSASIEQDGSEGKKKRRKRRSKRDSDTFTDSASVESSPARIGQSSEKLKSMDDKDKEKKAGGFFSSIFGSRVSEPVDSKRSSSTDRPSRDVHSEIGRREYEESRRQRKEEKSSRRDEESGSDKENSKVRDKDGVDIENYKSSRQRREERRRRRYEDIVDSGKSGEYEKDRKLSEDNDENQSFLAEGPEMPAQIGDGDRGSGASGHVRLAEGAITGLGIGVLGQRPRGRSTPPEASERIMDPAPRSRSRPASPEPDRQEGDNQSQSSRRSSILRSKDSPTAVPLHFRRPPASPGTNRSVSVGTPTAPSPGSPTTPKRRPNSTEFKNSREMRPLWLVERHGPGHGEHKLEEPLPSLPSSKTSSANTSVEDLTALQDERSWEAVDLSHHVHGMRRLSGIDVSQSRGFEHDAFGSQHVTPTATTFEQIHPHSRKEKLKYEFHSPSELLQDPSPYGDVQPSNMGDLPSAEGSAVGVKDASSENEDSAELAAEALPPRPSTPQNNVTAASEDTETTPTQTRTVNAFEGPGFAGVVDAAVAAAVSNRLSTRPDVAIPDKSSPEDLPYDADRTHKPIADQELAATSPPAPGVPLGFAAVVDAAVAAATISIGGQPEAAKELEQSPEISEPIPQTPHPNEQETSHPTGNDSVPRDDKRRDSVDTVVPQAEEASDEKEKLDTSAVMPDLTGENKELPSEAKNENANDNSQAQTEQPPVDTDEPSSSSAKKKKKKNKKKRQSMDSNTQEPTTPVDDSTIDQGGVGISAVEDAQADAVETFEPAPKEQILVEQPASAEPTPAPEPEPTETTVDVEKAIEAPDVRKELEEEPAPAAPEDTPAEPTAETPAEDQAETSSSKKSKKKKKKKNKGSAPEENTEDPASTETPEASAANSQVVAAEQVESTLETTQPAEEEPKPTEESAIAVAENTVEPEPAPKEMEATEDPMFQDISVPGESQDSPADADNQAKELPHPEEEFQAEATHAQELPEDTEIINKTDDLSSGIDPSGQAGGDMVNEAASPEVWHDALASSPEDKNGEAEQADLKSNEPQNEGKAPVSELPALDKELSEISERPAEVDAPADTPLVDSPSTDQVEAADSGVQNEEPTPTAAELETPLSRKNSKKNKKKNKRKNTAETPVQNEAVHTADPISSIEGVPEPGPEATTTAVEEPQVTLPDEAVDENKGESRDVQAVKEETSPENAAEVANDSQPSTFEEIHLAGAEQSAPDAIAEIMGESQPAEPQDVLATAPEEPIDGQPKKKAKKKKNRKTANVSESQPESEAEAKTEKLQSAELAENPQPHIRDEVAGDSQVPPESGASEAPAGIEDVTPISAAEAVEFDLPVEKDETNGGEPHVSELNKQLNNETVPGPETGSEPVPEAGEITQSGKKSKKNKKKKQSLSLAPDETPASDPSTPAGTADGNADLPAAPEDSLKTDQEPMPEEPTVSQPIVDLVTETLNLSMAEEAVPMTAAQKKTKKEKKKKRQSALLDEPTATESIEEANAKDVTSEGTQMPLEVPSEPQSSGPTLDAIEHAEAAAEHSQEQPNKDVTLHADHSPNSDGEFVLVPEHVPYGSNDEHKTQPGSMELDVTQVNTELEKEPSTQEGVLEANEATPAETPSAADQHVQEESSPTPAMEGGAAAEELVAVEPDVLEGSQDKITEDNDTPDDSLTAKEPQTELVNAETTQKTEQGDVVLDVEAGSEGLVRDDQPVAPSKKKDKKKKKKRQSLTIDDEQRSSTKEEPTAEFSSDHVPEPSAVDESATTPSASEEQQKPETDITETVTQTAAEPTPSSASEEPENIAEAPSNESTQEPAAEEAQTAKSKKKAKKDKKKRKSVSFEIGEPLTQQSEPGHPTATPGETVTPHEGPKPGDKPTSPKDSSEEFQSGEAVPESPQDSAGIVTQPEQPEPTAEATVVTEQHKQVTEPSLVSINEEQAVVEETVAPPVVDEASQLQEQKVSSETLWSETQRDVVKSFQDAESLEEEKGETAVSPSLENNEGTKPGAWVEQAEFEPQTPTDDGEQGVGPSKSKKNKKKKKRNTLESTEDVPVIPPGPSKIELLESTPVLETEETHDIVEPDTTVSENVHEEEKPEDEFGGFMSAKAKKKAKKKDKKRQSKILDSANDATNTAESAPDISEQAPLETASGEADGPDATFSQETSETISTEAKSSEPSPETALTPAEDDGKENQSHDTEPHGGNDKDLTWTDHMVSSQVEQQQGTPSDRPSEPAPETEPISTREAATSIDVEQLDNNADDASPAVNDRLERSGEEGTRVKKEIVSEEPEVQYEGLLEIPREEKAEISSQGEDTIQVKSDAEVEESVKATVEGTPEDSMSQEDAPISVLDGGDATTKDQFTSIEVNDPSQSKDILEPENEELPLPIPGKKKKAQQETKIDETSQDDSVDAVQEESPTSREMTDTGLPVAESQADPIAEPFHELPEPQKAVEIAVEDKSMQETLKFKQDVTPAEDVFQEPPALGRKKSKKDKKKDLLAQNTAVESRENKFKEKQLATEEPLITPSDARTTVLATPVFTQALETPTKTTVDAGERELHLSAVQSTVPVEDNINALETSGAQTLESFRTLEAPEQPLERNILLNDYAAKTPEELPAVEKSATYETATEPIIEEAALSHKNSKKKSKKAKKQAQEQQEKSTTPTPAEHGEESIVETTAAIPSTPGPAENSDDIPEANISEEQVAQLEHSEQLVLSDAARPQERLGQTPNMDNQTDDVQSTEQGKEGNVQAEPRQVESEDPIESQPGSTAAVARKLSKKDRRKAKKKSAKDAIEPSDEPELRNPTEPIGASCSTSNQAKIDQDQFLTVASDKQMVEEVPRPLEVEPAASEVYQGATDENDWPAIDWEKGKVEFKEQTPLSSPEAHAVPFEPAIAEFDETAIPEGLLRRQSLSREEQLAGGKDGSSQHTRADEIAAPQEGAVMIEPSAVAETEQSAGLQAKSVSSQGAPKTIQDDMQHPENRLARDQTKSETGVVPSKQSKIGSIFPDLERGSFRRPVPGQVLMPVKDRAEDETIDQNADDNSAIKVSEAPIPAGEPEESHLQSQQDEKGPEPTTTVSTLDLSLEEPTKMQDTSNTPVNLAVDIEVDPSYNVSVISDGLVNETKSIEIEWKTDGDKGTQEAETPLYAPLPVHEQKSSLVSQASPLDMDRDEPIPRNDSSCGLRRSPSIHGRHNHPPRTWSLEDTPITKAVTPPLFGGPVGATADMSSPPRTPLQPIAEQEPEVRVEQASGFRSMVSEHGTPRLEMKPEHVLPRPETPIRKFTDNALARQTWPVAENDIFKSSEDEDAALTVKKQRPGNKWPAEVLKTPDKGMPILRPSSVSSVKSVQSTHSVTGGQRSLRRTSRNTSGDLRAASQAQESHGTQPHATPQPPQPPPSDLNIEHIASSSSYDPVTDKGKRPIRAMTDVYEGWGESPSSPRSPSRPPSIRHRRSMQHLQELEARLDQLISENRLLIAAREAAEDKLRNASVARRKSDHTLNERSADLRDREAEVEKLKKSVEWLQKEVTRLTEENEGLITTNSNLTAAHAKEIESVRESSSRQLDDLRSRYEQLSMEVQNTVRHEIETALARKDNELRRLREELETARDKVSQLQQQIAASLHDNVLVFRDEDYFDAACQKLCGHVQQWVLRFSKHSDHRRCRKLAEIQDEKIADRFDNAILDGYDTDTYLADRVRRRDIFMSVVMTMVWEFVFTRYLFGMDREQRQKLKSLEKQLNEVGPRSAVHRWRAITLTLLSKRPAFARQRESDTEAVALEIFETLSRLLPPPSHVEVQLLESLRKVLRVAVNLSIEMRTQLAEYIMLPPLQPEYDTNGDLARQVYFNASLMNERSGETTSNEELESQQAVVRVVLFPLVVKKGNDTGEGEDEVVVCPAQVLVARPDKDPRASKIFSSDRMSLDGTKSVHSVAPSSTMDISNVI.

A compositionally biased stretch (gly residues) spans 1-10; the sequence is MFRALMGGGR. Disordered regions lie at residues 1 to 270, 286 to 315, 331 to 365, 510 to 555, 596 to 712, 800 to 901, 913 to 944, 1027 to 1145, 1164 to 1297, 1310 to 1398, 1432 to 1993, 2067 to 2146, 2165 to 2207, 2233 to 3065, 3077 to 3894, 3910 to 4034, 4072 to 4128, 4238 to 4421, 4442 to 4463, 4509 to 4698, 4733 to 4850, and 4910 to 5052; these read MFRA…SSMG, EVDP…TFGI, LPLP…PHTH, SRDA…KKSS, TESV…DISQ, AATS…FPTG, ALAS…PVPT, NRPH…KDSF, VLSG…GYRD, PTPP…RYVS, EDPT…TSVE, SELL…VNAF, NRLS…SPPA, PEAA…SQPI, MAEE…EIVS, EEKA…DTGL, KFKQ…EEPL, EAAL…SNQA, PRPL…DEND, LRRQ…TSNT, KTDG…VEQA, and ALTV…RHRR. Residues 1–1100 form a woronin bodies-binding region region; it reads MFRALMGGGR…RASGVQLIDR (1100 aa). Residues 14-23 are compositionally biased toward low complexity; that stretch reads SRSTTSSSKS. 2 stretches are compositionally biased toward basic and acidic residues: residues 42 to 51 and 89 to 167; these read SRGDDRDRGL and VEHD…ERSR. Polar residues predominate over residues 299-313; the sequence is AGTTSEPPKPSNTTF. Pro residues predominate over residues 334–352; the sequence is PASPTSPPEPVPTTAPYAP. Over residues 514–523 the composition is skewed to basic residues; the sequence is PRKHHYRQRR. A compositionally biased stretch (polar residues) spans 598 to 607; the sequence is SVSTARRSQT. Residues 639–655 show a composition bias toward basic residues; sequence HRSRSRSHSSSRNRRHS. Residues 660 to 674 are compositionally biased toward low complexity; sequence AAVGAAVGSGAIALA. Over residues 682–698 the composition is skewed to basic residues; it reads SRSRSRSRFPRKSKGRK. The segment covering 809-825 has biased composition (basic and acidic residues); that stretch reads RAGEILVAKETRSRHSD. Low complexity-rich tracts occupy residues 842 to 851 and 862 to 880; these read GDQSSSSVSS and GSDE…GWRW. The span at 881–891 shows a compositional bias: basic residues; that stretch reads GSKKNKKKKRA. Basic and acidic residues-rich tracts occupy residues 1068 to 1091, 1098 to 1145, 1178 to 1198, 1207 to 1226, 1356 to 1365, 1375 to 1387, 1447 to 1462, and 1478 to 1488; these read LTKE…DAER, IDRD…KDSF, SQRR…RGSE, SKSE…RQPE, WGEHKTHEYE, SVDH…REQP, GRVE…ESKS, and EEKAPSSRVIE. Residues 1506–1516 show a composition bias toward low complexity; sequence QESSEPQTRTS. Composition is skewed to basic and acidic residues over residues 1521–1536, 1549–1559, and 1572–1594; these read VIDR…DGSR, GKERDESELRA, and EELR…DRRS. Positions 1639-1648 are enriched in basic residues; it reads KKKRRKRRSK. Composition is skewed to basic and acidic residues over residues 1672–1686, 1700–1773, and 1788–1800; these read EKLK…EKKA, EPVD…QRRE, and KSGE…KLSE. Composition is skewed to low complexity over residues 1867–1876 and 1889–1898; these read PAPRSRSRPA and SQSSRRSSIL. The segment covering 1950 to 1975 has biased composition (basic and acidic residues); it reads KNSREMRPLWLVERHGPGHGEHKLEE. Composition is skewed to polar residues over residues 1984-1993 and 2121-2130; these read KTSSANTSVE and TPQNNVTAAS. Composition is skewed to basic and acidic residues over residues 2187-2196, 2269-2279, and 2307-2320; these read DADRTHKPIA, VPRDDKRRDSV, and GENK…KNEN. Residues 2321-2331 show a composition bias toward polar residues; sequence ANDNSQAQTEQ. A compositionally biased stretch (basic residues) spans 2344-2355; the sequence is AKKKKKKNKKKR. Over residues 2358–2370 the composition is skewed to polar residues; sequence MDSNTQEPTTPVD. Basic and acidic residues predominate over residues 2427–2441; the sequence is DVEKAIEAPDVRKEL. Residues 2449 to 2461 are compositionally biased toward low complexity; sequence APEDTPAEPTAET. A compositionally biased stretch (basic residues) spans 2473–2484; sequence KKSKKKKKKKNK. A compositionally biased stretch (polar residues) spans 2494-2525; that stretch reads DPASTETPEASAANSQVVAAEQVESTLETTQP. Basic and acidic residues-rich tracts occupy residues 2580-2590, 2647-2661, and 2677-2691; these read NQAKELPHPEE, PEDK…DLKS, and ALDK…RPAE. Residues 2719–2734 show a composition bias toward low complexity; sequence EEPTPTAAELETPLSR. Residues 2735–2747 are compositionally biased toward basic residues; the sequence is KNSKKNKKKNKRK. The segment covering 2796–2812 has biased composition (basic and acidic residues); sequence DENKGESRDVQAVKEET. A compositionally biased stretch (basic residues) spans 2874–2884; it reads KKKAKKKKNRK. Residues 2885 to 2894 show a composition bias toward polar residues; it reads TANVSESQPE. Composition is skewed to basic residues over residues 3003 to 3013 and 3089 to 3100; these read KKSKKNKKKKQ and KKTKKEKKKKRQ. Basic and acidic residues predominate over residues 3145–3172; that stretch reads AIEHAEAAAEHSQEQPNKDVTLHADHSP. Low complexity predominate over residues 3248–3268; the sequence is PAMEGGAAAEELVAVEPDVLE. Residues 3293-3303 are compositionally biased toward polar residues; that stretch reads ELVNAETTQKT. Residues 3329-3341 are compositionally biased toward basic residues; that stretch reads SKKKDKKKKKKRQ. Over residues 3347 to 3367 the composition is skewed to basic and acidic residues; sequence DEQRSSTKEEPTAEFSSDHVP. 2 stretches are compositionally biased toward low complexity: residues 3397-3409 and 3422-3435; these read TQTA…SSAS and ESTQ…AQTA. Residues 3436-3450 show a composition bias toward basic residues; it reads KSKKKAKKDKKKRKS. Basic and acidic residues predominate over residues 3480 to 3495; sequence EGPKPGDKPTSPKDSS. The segment covering 3547 to 3564 has biased composition (low complexity); sequence EEQAVVEETVAPPVVDEA. Polar residues-rich tracts occupy residues 3565-3580 and 3604-3613; these read SQLQ…LWSE and VSPSLENNEG. Composition is skewed to basic residues over residues 3642-3652 and 3716-3730; these read KSKKNKKKKKR and KAKK…KRQS. Over residues 3768-3787 the composition is skewed to polar residues; the sequence is TFSQETSETISTEAKSSEPS. Residues 3800–3819 are compositionally biased toward basic and acidic residues; sequence KENQSHDTEPHGGNDKDLTW. Residues 3823–3837 show a composition bias toward polar residues; the sequence is MVSSQVEQQQGTPSD. Over residues 3876–3893 the composition is skewed to basic and acidic residues; it reads DRLERSGEEGTRVKKEIV. Polar residues-rich tracts occupy residues 3915–3925 and 3965–3980; these read ISSQGEDTIQV and KDQF…SQSK. Residues 4010-4020 show a composition bias toward acidic residues; the sequence is TSQDDSVDAVQ. Over residues 4111–4123 the composition is skewed to basic and acidic residues; the sequence is ESRENKFKEKQLA. Positions 4244 to 4255 are enriched in basic residues; the sequence is KNSKKKSKKAKK. The segment covering 4328 to 4345 has biased composition (polar residues); it reads LGQTPNMDNQTDDVQSTE. The segment covering 4378–4391 has biased composition (basic residues); the sequence is KLSKKDRRKAKKKS. Positions 4392 to 4406 are enriched in basic and acidic residues; sequence AKDAIEPSDEPELRN. Positions 4495 to 5538 are septal pore-binding region; it reads AIAEFDETAI…SSTMDISNVI (1044 aa). Residues 4554-4570 are compositionally biased toward polar residues; it reads TEQSAGLQAKSVSSQGA. Basic and acidic residues-rich tracts occupy residues 4574–4591 and 4660–4673; these read IQDD…DQTK and EESH…EKGP. Low complexity predominate over residues 4940-4954; the sequence is SSVSSVKSVQSTHSV. Over residues 4966 to 4988 the composition is skewed to polar residues; sequence RNTSGDLRAASQAQESHGTQPHA. Over residues 4989 to 4998 the composition is skewed to pro residues; that stretch reads TPQPPQPPPS. Positions 5050–5223 form a coiled coil; it reads HRRSMQHLQE…QQQIAASLHD (174 aa).

In terms of assembly, binds directly or indirectly to the Woronin body major protein hexA.

Its subcellular location is the cell septum. Functionally, acts as the tether and is essential for anchoring of Woronin bodies at the septal pore. In damaged hyphae, Woronin bodies occlude septal pores in order to separate intact from damaged compartments. The chain is Leashin from Aspergillus fumigatus (strain ATCC MYA-4609 / CBS 101355 / FGSC A1100 / Af293) (Neosartorya fumigata).